The chain runs to 130 residues: Histone H2A type 1-K (130 aa).

Residues 1–22 (MSGRGKQGGKARAKAKTRSSRA) form a disordered region. Ser-2 carries the post-translational modification N-acetylserine. Ser-2 carries the phosphoserine; by RPS6KA5 modification. Arg-4 is modified (citrulline; alternate). The residue at position 4 (Arg-4) is a Symmetric dimethylarginine; by PRMT5; alternate. Lys-6 and Lys-10 each carry N6-(2-hydroxyisobutyryl)lysine; alternate. Lys-6 carries the N6-(beta-hydroxybutyryl)lysine; alternate modification. Residues Lys-6 and Lys-10 each carry the N6-acetyllysine; alternate modification. Basic residues predominate over residues 7 to 19 (QGGKARAKAKTRS). An N6-lactoyllysine; alternate modification is found at Lys-10. N6-succinyllysine; alternate is present on Lys-10. Glycyl lysine isopeptide (Lys-Gly) (interchain with G-Cter in ubiquitin) cross-links involve residues Lys-14 and Lys-16. The residue at position 37 (Lys-37) is an N6-(2-hydroxyisobutyryl)lysine; alternate. Lys-37 carries the N6-(beta-hydroxybutyryl)lysine; alternate modification. At Lys-37 the chain carries N6-crotonyllysine; alternate. N6-(2-hydroxyisobutyryl)lysine occurs at positions 75 and 76. Position 96 is an N6-(2-hydroxyisobutyryl)lysine; alternate (Lys-96). An N6-succinyllysine; alternate modification is found at Lys-96. Lys-96 is modified (N6-glutaryllysine; alternate). Gln-105 carries the N5-methylglutamine modification. Lys-119 is modified (N6-(2-hydroxyisobutyryl)lysine; alternate). N6-crotonyllysine; alternate is present on residues Lys-119 and Lys-120. An N6-glutaryllysine; alternate mark is found at Lys-119 and Lys-120. Lys-120 carries the post-translational modification N6-(beta-hydroxybutyryl)lysine; alternate. A Glycyl lysine isopeptide (Lys-Gly) (interchain with G-Cter in ubiquitin); alternate cross-link involves residue Lys-120. Thr-121 carries the phosphothreonine; by DCAF1 modification. Residue Lys-126 is modified to N6-(beta-hydroxybutyryl)lysine; alternate. Residue Lys-126 is modified to N6-crotonyllysine; alternate. Lys-126 bears the N6-glutaryllysine; alternate mark.

Belongs to the histone H2A family. In terms of assembly, the nucleosome is a histone octamer containing two molecules each of H2A, H2B, H3 and H4 assembled in one H3-H4 heterotetramer and two H2A-H2B heterodimers. The octamer wraps approximately 147 bp of DNA. Deiminated on Arg-4 in granulocytes upon calcium entry. Post-translationally, monoubiquitination of Lys-120 (H2AK119Ub) by RING1, TRIM37 and RNF2/RING2 complex gives a specific tag for epigenetic transcriptional repression and participates in X chromosome inactivation of female mammals. It is involved in the initiation of both imprinted and random X inactivation. Ubiquitinated H2A is enriched in inactive X chromosome chromatin. Ubiquitination of H2A functions downstream of methylation of 'Lys-27' of histone H3 (H3K27me). H2AK119Ub by RNF2/RING2 can also be induced by ultraviolet and may be involved in DNA repair. Following DNA double-strand breaks (DSBs), it is ubiquitinated through 'Lys-63' linkage of ubiquitin moieties by the E2 ligase UBE2N and the E3 ligases RNF8 and RNF168, leading to the recruitment of repair proteins to sites of DNA damage. Ubiquitination at Lys-14 and Lys-16 (H2AK13Ub and H2AK15Ub, respectively) in response to DNA damage is initiated by RNF168 that mediates monoubiquitination at these 2 sites, and 'Lys-63'-linked ubiquitin are then conjugated to monoubiquitin; RNF8 is able to extend 'Lys-63'-linked ubiquitin chains in vitro. Deubiquitinated by USP51 at Lys-14 and Lys-16 (H2AK13Ub and H2AK15Ub, respectively) after damaged DNA is repaired. H2AK119Ub and ionizing radiation-induced 'Lys-63'-linked ubiquitination (H2AK13Ub and H2AK15Ub) are distinct events. In terms of processing, phosphorylation on Ser-2 (H2AS1ph) is enhanced during mitosis. Phosphorylation on Ser-2 by RPS6KA5/MSK1 directly represses transcription. Acetylation of H3 inhibits Ser-2 phosphorylation by RPS6KA5/MSK1. Phosphorylation at Thr-121 (H2AT120ph) by DCAF1 is present in the regulatory region of many tumor suppresor genes and down-regulates their transcription. Symmetric dimethylation on Arg-4 by the PRDM1/PRMT5 complex may play a crucial role in the germ-cell lineage. Post-translationally, glutamine methylation at Gln-105 (H2AQ104me) by FBL is specifically dedicated to polymerase I. It is present at 35S ribosomal DNA locus and impairs binding of the FACT complex. In terms of processing, crotonylation (Kcr) is specifically present in male germ cells and marks testis-specific genes in post-meiotic cells, including X-linked genes that escape sex chromosome inactivation in haploid cells. Crotonylation marks active promoters and enhancers and confers resistance to transcriptional repressors. It is also associated with post-meiotically activated genes on autosomes. Hydroxybutyrylation of histones is induced by starvation. Post-translationally, lactylated in macrophages by EP300/P300 by using lactoyl-CoA directly derived from endogenous or exogenous lactate, leading to stimulates gene transcription.

The protein resides in the nucleus. It is found in the chromosome. Its function is as follows. Core component of nucleosome. Nucleosomes wrap and compact DNA into chromatin, limiting DNA accessibility to the cellular machineries which require DNA as a template. Histones thereby play a central role in transcription regulation, DNA repair, DNA replication and chromosomal stability. DNA accessibility is regulated via a complex set of post-translational modifications of histones, also called histone code, and nucleosome remodeling. This chain is Histone H2A type 1-K, found in Mus musculus (Mouse).